A 207-amino-acid chain; its full sequence is Prolactin (207 aa).

An N-terminal signal peptide occupies residues 1–20 (KSRLYFAVTVLMCAFVSING). Disulfide bonds link Cys-66–Cys-180 and Cys-197–Cys-207.

Belongs to the somatotropin/prolactin family. Pituitary gland.

Its subcellular location is the secreted. In Hypophthalmichthys molitrix (Silver carp), this protein is Prolactin (prl).